Reading from the N-terminus, the 357-residue chain is Protein Wnt-5b (357 aa).

The first 18 residues, methionine 1–proline 18, serve as a signal peptide directing secretion. Cysteines 81 and 92 form a disulfide. 2 N-linked (GlcNAc...) asparagine glycosylation sites follow: asparagine 91 and asparagine 97. Cystine bridges form between cysteine 131–cysteine 139, cysteine 141–cysteine 159, cysteine 215–cysteine 229, cysteine 217–cysteine 224, cysteine 286–cysteine 317, cysteine 302–cysteine 312, cysteine 316–cysteine 356, cysteine 332–cysteine 347, cysteine 334–cysteine 344, and cysteine 339–cysteine 340. Serine 221 carries the O-palmitoleoyl serine; by PORCN lipid modification. 2 N-linked (GlcNAc...) asparagine glycosylation sites follow: asparagine 289 and asparagine 303.

It belongs to the Wnt family. Palmitoleoylation is required for efficient binding to frizzled receptors. Depalmitoleoylation leads to Wnt signaling pathway inhibition. Predominantly in neuroectodermal tissues.

The protein localises to the secreted. Its subcellular location is the extracellular space. It localises to the extracellular matrix. Its function is as follows. Ligand for members of the frizzled family of seven transmembrane receptors. Probable developmental protein. May be a signaling molecule which affects the development of discrete regions of tissues. Is likely to signal over only few cell diameters. This Ambystoma mexicanum (Axolotl) protein is Protein Wnt-5b (WNT-5B).